Here is a 223-residue protein sequence, read N- to C-terminus: N-terminal Xaa-Pro-Lys N-methyltransferase 1 (223 aa).

Methionine 1 is subject to N-acetylmethionine. Threonine 2 bears the N-acetylthreonine; in N-terminal Xaa-Pro-Lys N-methyltransferase 1, N-terminally processed mark. Residues glycine 69, arginine 74, 91 to 93 (DVT), 119 to 120 (LQ), and glutamine 135 contribute to the S-adenosyl-L-methionine site.

This sequence belongs to the methyltransferase superfamily. NTM1 family.

The protein localises to the nucleus. The enzyme catalyses N-terminal L-alanyl-L-prolyl-L-lysyl-[protein] + 3 S-adenosyl-L-methionine = N-terminal N,N,N-trimethyl-L-alanyl-L-prolyl-L-lysyl-[protein] + 3 S-adenosyl-L-homocysteine + 3 H(+). It carries out the reaction N-terminal L-seryl-L-prolyl-L-lysyl-[protein] + 3 S-adenosyl-L-methionine = N-terminal N,N,N-trimethyl-L-seryl-L-prolyl-L-lysyl-[protein] + 3 S-adenosyl-L-homocysteine + 3 H(+). It catalyses the reaction N-terminal L-prolyl-L-prolyl-L-lysyl-[protein] + 2 S-adenosyl-L-methionine = N-terminal N,N-dimethyl-L-prolyl-L-prolyl-L-lysyl-[protein] + 2 S-adenosyl-L-homocysteine + 2 H(+). Functionally, distributive alpha-N-methyltransferase that methylates the N-terminus of target proteins containing the N-terminal motif [Ala/Gly/Pro/Ser]-Pro-Lys when the initiator Met is cleaved. Specifically catalyzes mono-, di- or tri-methylation of the exposed alpha-amino group of the Ala, Gly or Ser residue in the [Ala/Gly/Ser]-Pro-Lys motif and mono- or di-methylation of Pro in the Pro-Pro-Lys motif. Some of the substrates may be primed by NTMT2-mediated monomethylation. Catalyzes the trimethylation of the N-terminal Gly in CENPA (after removal of Met-1). Responsible for the N-terminal methylation of KLHL31, MYL2, MYL3, RB1, RCC1, RPL23A and SET. Required during mitosis for normal bipolar spindle formation and chromosome segregation via its action on RCC1. In Ailuropoda melanoleuca (Giant panda), this protein is N-terminal Xaa-Pro-Lys N-methyltransferase 1 (NTMT1).